Reading from the N-terminus, the 565-residue chain is NAD-dependent malic enzyme (565 aa).

Tyr-104 serves as the catalytic Proton donor. An NAD(+)-binding site is contributed by Arg-157. Lys-175 acts as the Proton acceptor in catalysis. A divalent metal cation contacts are provided by Glu-246, Asp-247, and Asp-270. Residues Asp-270 and Asn-418 each coordinate NAD(+).

The protein belongs to the malic enzymes family. As to quaternary structure, homotetramer. Mg(2+) is required as a cofactor. The cofactor is Mn(2+).

The catalysed reaction is (S)-malate + NAD(+) = pyruvate + CO2 + NADH. It catalyses the reaction oxaloacetate + H(+) = pyruvate + CO2. This Salmonella heidelberg (strain SL476) protein is NAD-dependent malic enzyme.